A 1173-amino-acid chain; its full sequence is Alpha-mannosidase 2 (1173 aa).

The tract at residues 1 to 21 (MPFSSYIGNSRRSSTGGGTGG) is disordered. At 1 to 50 (MPFSSYIGNSRRSSTGGGTGGWGQSLLPTALSKSKLAINRKPRKRTLVVN) the chain is on the cytoplasmic side. The helical; Signal-anchor transmembrane segment at 51–71 (FIFANFFVIALTVSLLFFLLT) threads the bilayer. Topologically, residues 72 to 1173 (LFHFGVPGPI…AYKLELRPHK (1102 aa)) are lumenal. Asn-106 carries an N-linked (GlcNAc...) asparagine glycan. Zn(2+)-binding residues include His-162 and Asp-164. Asn-262 carries N-linked (GlcNAc...) asparagine glycosylation. Asp-276 serves as a coordination point for Zn(2+). The Nucleophile role is filled by Asp-276. Asn-467 is a glycosylation site (N-linked (GlcNAc...) asparagine). Residue His-564 participates in Zn(2+) binding. Asn-675, Asn-772, Asn-782, Asn-991, Asn-1098, and Asn-1108 each carry an N-linked (GlcNAc...) asparagine glycan.

This sequence belongs to the glycosyl hydrolase 38 family. As to quaternary structure, homodimer; disulfide-linked. Interacts with GALT1. Zn(2+) is required as a cofactor. Glycosylated.

The protein resides in the golgi apparatus membrane. The enzyme catalyses N(4)-{beta-D-GlcNAc-(1-&gt;2)-alpha-D-Man-(1-&gt;3)-[alpha-D-Man-(1-&gt;3)-[alpha-D-Man-(1-&gt;6)]-alpha-D-Man-(1-&gt;6)]-beta-D-Man-(1-&gt;4)-beta-D-GlcNAc-(1-&gt;4)-beta-D-GlcNAc}-L-asparaginyl-[protein] + 2 H2O = 2 alpha-D-mannopyranose + an N(4)-{beta-D-GlcNAc-(1-&gt;2)-alpha-D-Man-(1-&gt;3)-[alpha-D-Man-(1-&gt;6)]-beta-D-Man-(1-&gt;4)-beta-D-GlcNAc-(1-&gt;4)-beta-D-GlcNAc}-L-asparaginyl-[protein]. Its pathway is protein modification; protein glycosylation. With respect to regulation, inhibited by 1 mM Cu(2+) and by the class II alpha-mannosidase inhibitor swainsonine. In terms of biological role, catalyzes the first committed step in the biosynthesis of complex N-glycans. It controls conversion of high mannose to complex N-glycans; the final hydrolytic step in the N-glycan maturation pathway. Converts GlcNAcMan(5)GlcNAc(2) (Man5Gn) into GlcNAcMan(3)GlcNAc(2) (MGn) by sequential removal of two alpha1,6- and alpha1,3-linked mannose residues from the alpha1,6-mannose branch of the substrate. To a lesser extent, also able to cleave beta1,2-xylosylated Man5Gn-glycopeptide (Man5GnX-GP) and pyridylaminated substrates Man5Gn-PA and Man5GnX-PA, but not active toward Man5-glycopeptide. Required for resistance to salt stress. This is Alpha-mannosidase 2 from Arabidopsis thaliana (Mouse-ear cress).